Here is a 218-residue protein sequence, read N- to C-terminus: Ras-related protein Rab-4A (218 aa).

Residues G23, T24, G25, K26, S27, C28, S42, H44, and T45 each coordinate GTP. S27 is a binding site for Mg(2+). A Switch 1 motif is present at residues 44-49 (HTIGVE). Mg(2+) contacts are provided by T45 and D68. A Switch 2 motif is present at residues 70-79 (AGQERFRSVT). G71 is a GTP binding site. 5-glutamyl serotonin is present on Q72. Residues N126, K127, D129, A157, and L158 each coordinate GTP. Position 190 is a phosphoserine (S190). S204 carries the phosphoserine; by CDK1 modification. 2 S-geranylgeranyl cysteine lipidation sites follow: C216 and C218. At C218 the chain carries Cysteine methyl ester.

It belongs to the small GTPase superfamily. Rab family. As to quaternary structure, interacts with SGSM1, SGSM2 and SGSM3. Interacts with RAB11FIP1, RABEP1, ZFYVE20 and RUFY1. Interacts (membrane-bound form) with NDRG1; the interaction involves NDRG1 in vesicular recycling of E-cadherin. Interacts (in GTP-bound form) with GRIPAP1 (via N-terminus). Interacts with RABEP1 and RBSN. Does not interact with HPS4. Interacts with RABEP2; this interaction may mediate VEGFR2 cell surface expression. The cofactor is Mg(2+). In terms of processing, serotonylation of Gln-72 by TGM2 during activation and aggregation of platelets leads to constitutive activation of GTPase activity. Phosphorylated by CDK1 kinase during mitosis.

The protein resides in the membrane. Its subcellular location is the cytoplasm. It localises to the early endosome membrane. The protein localises to the recycling endosome membrane. It catalyses the reaction GTP + H2O = GDP + phosphate + H(+). Regulated by guanine nucleotide exchange factors (GEFs) which promote the exchange of bound GDP for free GTP. Regulated by GTPase activating proteins (GAPs) which increase the GTP hydrolysis activity. Inhibited by GDP dissociation inhibitors (GDIs). Functionally, the small GTPases Rab are key regulators of intracellular membrane trafficking, from the formation of transport vesicles to their fusion with membranes. Rabs cycle between an inactive GDP-bound form and an active GTP-bound form that is able to recruit to membranes different sets of downstream effectors directly responsible for vesicle formation, movement, tethering and fusion. RAB4A is involved in protein transport. Also plays a role in vesicular traffic. Mediates VEGFR2 endosomal trafficking to enhance VEGFR2 signaling. Acts as a regulator of platelet alpha-granule release during activation and aggregation of platelets. This Rattus norvegicus (Rat) protein is Ras-related protein Rab-4A.